The primary structure comprises 803 residues: E3 ubiquitin-protein ligase UHRF2 (803 aa).

The region spanning 1–78 is the Ubiquitin-like domain; it reads MWIQVRTIDG…IQLLVRPDSS (78 aa). Polar residues-rich tracts occupy residues 79-96, 106-115, 167-181, and 189-200; these read LPST…SSHN, GGSSSQPSTS, KNGS…NVNH, and KLDNVPSTSNSD. Disordered stretches follow at residues 79 to 115 and 154 to 200; these read LPST…PSTS and RASD…SNSD. Residues 118–312 form a required for interaction with histone H3 region; the sequence is TCLIDPGFGL…VDEIFKIEKP (195 aa). The interval 195–289 is interaction with PCNP; the sequence is STSNSDSVAA…KEVRVKVFLG (95 aa). Residues 340–396 form a PHD-type zinc finger; it reads DKTCHMCSCHKCGEKRDPNMQLLCDECNMAYHIYCLSPPLDKVPEEEYWYCPSCKTD. The methyl-CpG binding and interaction with HDAC1 stretch occupies residues 415-645; the sequence is KMPSASTESR…LQYPAGYPSE (231 aa). One can recognise a YDG domain in the interval 449–613; it reads GPIPGIPVGS…FLVWRYLLRR (165 aa). Residues 643 to 676 are disordered; it reads PSEKEGKKTKGQSKKQGSEATKRPASDDECPGDS. The segment covering 658-668 has biased composition (basic and acidic residues); that stretch reads QGSEATKRPAS. Position 668 is a phosphoserine (serine 668). The RING-type zinc finger occupies 734–773; sequence CVCCQELVYQPVTTECFHNVCKDCLQRSFKAQVFSCPACR.

Homodimer; disulfide-linked. Binds methylated CpG containing oligonucleotides. Interacts with H3; the interaction has a preference for the 'Lys-9' trimethylated form of H3 (H3K9me3). Interacts with PCNP. Interacts with HDAC1. Interacts directly with CCNE1; the interaction ubiquitinates CCNE1 and appears independent of CCNE1 phosphorylation. Interacts with CCND1; the interaction ubiquitinates CCND1 and appears independent of CCND1 phosphorylation. Interacts with p53/TP53 and RB1. Interacts with UBE2I. Interacts with ZNF618. Interacts with UHRF1. Interacts with FANCD2. Interacts with ATR. Interacts with PCNA. May be autoubiquitinated; which may lead to proteasomal degradation. In terms of processing, phosphorylated. Phosphorylation may be mediated by CDK2. Post-translationally, autosumoylated. Mostly detected in several tissues, including the thymus, spleen, lung, adrenal gland, and ovary. In addition, found in several tissues in the brain (cerebellum, hippocampus, and cerebral cortex).

It localises to the nucleus. The protein localises to the chromosome. It catalyses the reaction S-ubiquitinyl-[E2 ubiquitin-conjugating enzyme]-L-cysteine + [acceptor protein]-L-lysine = [E2 ubiquitin-conjugating enzyme]-L-cysteine + N(6)-ubiquitinyl-[acceptor protein]-L-lysine.. The protein operates within protein modification; protein ubiquitination. Its activity is regulated as follows. E3 ligase activity is robustly activated by 5-hydroxy-methylcytosine. Its function is as follows. E3 ubiquitin ligase that plays important roles in DNA methylation, histone modifications, cell cycle and DNA repair. Acts as a specific reader for 5-hydroxymethylcytosine (5hmC) and thereby recruits various substrates to these sites to ubiquitinate them. This activity also allows the maintenance of 5mC levels at specific genomic loci and regulates neuron-related gene expression. Participates in cell cycle regulation by ubiquitinating cyclins CCND1 and CCNE1 and thus inducing G1 arrest. Also ubiquitinates PCNP leading to its degradation by the proteasome. Plays an active role in DNA damage repair by ubiquitinating p21/CDKN1A leading to its proteasomal degradation. Also promotes DNA repair by acting as an interstrand cross-links (ICLs) sensor. Mechanistically, cooperates with UHRF1 to ensure recruitment of FANCD2 to ICLs, leading to FANCD2 monoubiquitination and subsequent activation. Contributes to UV-induced DNA damage response by physically interacting with ATR in response to irradiation, thereby promoting ATR activation. The chain is E3 ubiquitin-protein ligase UHRF2 (Uhrf2) from Mus musculus (Mouse).